A 508-amino-acid polypeptide reads, in one-letter code: Aldehyde dehydrogenase (508 aa).

Residues Glu264 and Cys303 contribute to the active site.

This sequence belongs to the aldehyde dehydrogenase family.

It catalyses the reaction acetaldehyde + NAD(+) + H2O = acetate + NADH + 2 H(+). It participates in organosulfur degradation. Functionally, catalyzes the NAD(+)-dependent oxidation of acetaldehyde to acetate. This is Aldehyde dehydrogenase from Paracoccus denitrificans (strain Pd 1222).